The following is a 451-amino-acid chain: TERF1-interacting nuclear factor 2 (451 aa).

A2 carries the N-acetylalanine modification. A disordered region spans residues 229-257 (NPLPKAKPGTHLPQGPSSRTHPEPLAGRH). The short motif at 256–278 (RHFNLAPLGRRRVQSQWASTRGG) is the TBM element. Residues 262-268 (PLGRRRV) carry the Nuclear localization signal motif. Phosphoserine is present on S295. Glycyl lysine isopeptide (Lys-Gly) (interchain with G-Cter in SUMO2) cross-links involve residues K302, K306, K341, and K353.

In terms of assembly, monomer. Found in a complex with POT1; TERF1 and TNKS1. Component of the shelterin complex (telosome) composed of TERF1, TERF2, TINF2, TERF2IP ACD and POT1. Interacts with TERF1, TERF2 and ACD. Detected in heart, brain, placenta, lung, liver, skeletal muscle, kidney and pancreas.

The protein localises to the nucleus. It is found in the chromosome. Its subcellular location is the telomere. It localises to the nucleus matrix. Its function is as follows. Component of the shelterin complex (telosome) that is involved in the regulation of telomere length and protection. Shelterin associates with arrays of double-stranded TTAGGG repeats added by telomerase and protects chromosome ends; without its protective activity, telomeres are no longer hidden from the DNA damage surveillance and chromosome ends are inappropriately processed by DNA repair pathways. Plays a role in shelterin complex assembly. Isoform 1 may have additional role in tethering telomeres to the nuclear matrix. The sequence is that of TERF1-interacting nuclear factor 2 (TINF2) from Homo sapiens (Human).